The chain runs to 378 residues: Alginate lyase (378 aa).

An N-terminal signal peptide occupies residues 1–28; the sequence is MQTPKLIRPTLLSMAILSSMAWATGASA. Substrate contacts are provided by residues 67–68, 140–141, and Tyr258; these read SK and HT. The interval 359–378 is disordered; it reads LTKVYDPSHEKGDKGDNDGS. Basic and acidic residues predominate over residues 364–378; sequence DPSHEKGDKGDNDGS.

Belongs to the polysaccharide lyase 5 family.

Its subcellular location is the periplasm. It carries out the reaction Eliminative cleavage of alginate to give oligosaccharides with 4-deoxy-alpha-L-erythro-hex-4-enuronosyl groups at their non-reducing ends and beta-D-mannuronate at their reducing end.. Catalyzes the depolymerization of alginate by cleaving the beta-1,4 glycosidic bond between two adjacent sugar residues via a beta-elimination mechanism. May serve to degrade mislocalized alginate that is trapped in the periplasmic space. This Pseudomonas syringae pv. syringae (strain B728a) protein is Alginate lyase.